The sequence spans 283 residues: Thymidylate synthase (283 aa).

Arginine 22 contributes to the dUMP binding site. The active-site Nucleophile is cysteine 160. DUMP is bound by residues 180 to 183, asparagine 191, and 221 to 223; these read RSCD and HIY. Aspartate 183 contacts (6R)-5,10-methylene-5,6,7,8-tetrahydrofolate. Serine 282 serves as a coordination point for (6R)-5,10-methylene-5,6,7,8-tetrahydrofolate.

This sequence belongs to the thymidylate synthase family. Bacterial-type ThyA subfamily. In terms of assembly, homodimer.

The protein resides in the cytoplasm. It catalyses the reaction dUMP + (6R)-5,10-methylene-5,6,7,8-tetrahydrofolate = 7,8-dihydrofolate + dTMP. The protein operates within pyrimidine metabolism; dTTP biosynthesis. Functionally, catalyzes the reductive methylation of 2'-deoxyuridine-5'-monophosphate (dUMP) to 2'-deoxythymidine-5'-monophosphate (dTMP) while utilizing 5,10-methylenetetrahydrofolate (mTHF) as the methyl donor and reductant in the reaction, yielding dihydrofolate (DHF) as a by-product. This enzymatic reaction provides an intracellular de novo source of dTMP, an essential precursor for DNA biosynthesis. This is Thymidylate synthase from Photobacterium profundum (strain SS9).